A 290-amino-acid polypeptide reads, in one-letter code: Agroclavine dehydrogenase (290 aa).

Belongs to the fgaFS/easG family. In terms of assembly, monomer.

The catalysed reaction is agroclavine + NADP(+) = didehydroagroclavine + NADPH + H(+). Its pathway is alkaloid biosynthesis; ergot alkaloid biosynthesis. Agroclavine dehydrogenase; part of the gene cluster that mediates the biosynthesis of fungal ergot alkaloid. DmaW catalyzes the first step of ergot alkaloid biosynthesis by condensing dimethylallyl diphosphate (DMAP) and tryptophan to form 4-dimethylallyl-L-tryptophan. The second step is catalyzed by the methyltransferase easF that methylates 4-dimethylallyl-L-tryptophan in the presence of S-adenosyl-L-methionine, resulting in the formation of 4-dimethylallyl-L-abrine. The catalase easC and the FAD-dependent oxidoreductase easE then transform 4-dimethylallyl-L-abrine to chanoclavine-I which is further oxidized by easD in the presence of NAD(+), resulting in the formation of chanoclavine-I aldehyde. Agroclavine dehydrogenase easG then mediates the conversion of chanoclavine-I aldehyde to agroclavine via a non-enzymatic adduct reaction: the substrate is an iminium intermediate that is formed spontaneously from chanoclavine-I aldehyde in the presence of glutathione. The presence of easA is not required to complete this reaction. Further conversion of agroclavine to paspalic acid is a two-step process involving oxidation of agroclavine to elymoclavine and of elymoclavine to paspalic acid, the second step being performed by the elymoclavine oxidase cloA. Paspalic acid is then further converted to D-lysergic acid. Ergopeptines are assembled from D-lysergic acid and three different amino acids by the D-lysergyl-peptide-synthetases composed each of a monomudular and a trimodular nonribosomal peptide synthetase subunit. LpsB and lpsC encode the monomodular subunits responsible for D-lysergic acid activation and incorporation into the ergopeptine backbone. LpsA1 and A2 subunits encode the trimodular nonribosomal peptide synthetase assembling the tripeptide portion of ergopeptines. LpsA1 is responsible for formation of the major ergopeptine, ergotamine, and lpsA2 for alpha-ergocryptine, the minor ergopeptine of the total alkaloid mixture elaborated by C.purpurea. D-lysergyl-tripeptides are assembled by the nonribosomal peptide synthetases and released as N-(D-lysergyl-aminoacyl)-lactams. Cyclolization of the D-lysergyl-tripeptides is performed by the Fe(2+)/2-ketoglutarate-dependent dioxygenase easH which introduces a hydroxyl group into N-(D-lysergyl-aminoacyl)-lactam at alpha-C of the aminoacyl residue followed by spontaneous condensation with the terminal lactam carbonyl group. In Claviceps purpurea (strain 20.1) (Ergot fungus), this protein is Agroclavine dehydrogenase.